Here is a 237-residue protein sequence, read N- to C-terminus: Ribonuclease 3 (237 aa).

One can recognise an RNase III domain in the interval 5 to 136 (VDELSARLGV…VIAALFLDQG (132 aa)). Glu49 contributes to the Mg(2+) binding site. Asp53 is a catalytic residue. Mg(2+) is bound by residues Asp122 and Glu125. The active site involves Glu125. Positions 163 to 232 (DYKSRLQARI…ARAALDALEG (70 aa)) constitute a DRBM domain. Residues 185 to 208 (IDRSGPEHRPEFTVEVRAGEERLG) show a composition bias toward basic and acidic residues. A disordered region spans residues 185–237 (IDRSGPEHRPEFTVEVRAGEERLGTGKGPSKQAAEQAAARAALDALEGGTDGR). Residues 216–231 (QAAEQAAARAALDALE) are compositionally biased toward low complexity.

The protein belongs to the ribonuclease III family. As to quaternary structure, homodimer. Mg(2+) serves as cofactor.

Its subcellular location is the cytoplasm. It carries out the reaction Endonucleolytic cleavage to 5'-phosphomonoester.. Functionally, digests double-stranded RNA. Involved in the processing of primary rRNA transcript to yield the immediate precursors to the large and small rRNAs (23S and 16S). Processes some mRNAs, and tRNAs when they are encoded in the rRNA operon. Processes pre-crRNA and tracrRNA of type II CRISPR loci if present in the organism. This Roseiflexus sp. (strain RS-1) protein is Ribonuclease 3.